Reading from the N-terminus, the 130-residue chain is Small ribosomal subunit protein uS9 (130 aa).

Belongs to the universal ribosomal protein uS9 family.

This is Small ribosomal subunit protein uS9 from Polaromonas sp. (strain JS666 / ATCC BAA-500).